The sequence spans 155 residues: MNYLKLTFDKLEVGEINDLVAHESCGAISLFVGTTRDNFDGKTVVLLEYEAYEAMALKTMNQICEELRARWPDIKHIGIHHRLGTVPVKEASVVIAVSSPHRKSSLEAVHFAIDELKKSVPVWKKEQYAEGEGCSEWKENKECSWSKSHRDNHIL.

Residues 101–102 (HR), Lys117, and 124–126 (KKE) each bind substrate.

The protein belongs to the MoaE family. MOCS2B subfamily. Heterotetramer; composed of 2 small (MOCS2A) and 2 large (MOCS2B) subunits.

Its subcellular location is the cytoplasm. The catalysed reaction is 2 [molybdopterin-synthase sulfur-carrier protein]-C-terminal-Gly-aminoethanethioate + cyclic pyranopterin phosphate + H2O = molybdopterin + 2 [molybdopterin-synthase sulfur-carrier protein]-C-terminal Gly-Gly + 2 H(+). The protein operates within cofactor biosynthesis; molybdopterin biosynthesis. Its function is as follows. Catalytic subunit of the molybdopterin synthase complex, a complex that catalyzes the conversion of precursor Z into molybdopterin. Acts by mediating the incorporation of 2 sulfur atoms from thiocarboxylated MOCS2A into precursor Z to generate a dithiolene group. In Aedes aegypti (Yellowfever mosquito), this protein is Molybdopterin synthase catalytic subunit 2.